Reading from the N-terminus, the 495-residue chain is GTPase Der (495 aa).

2 EngA-type G domains span residues 3-166 (PVIA…MDAE) and 208-381 (IKLA…DCST). GTP contacts are provided by residues 9 to 16 (GRPNVGKS), 56 to 60 (DTGGI), 118 to 121 (NKTD), 214 to 221 (GRPNVGKS), 261 to 265 (DTAGV), and 326 to 329 (NKWD). The KH-like domain maps to 382-466 (KRVGTSLLTR…PIRIQFKEGE (85 aa)).

It belongs to the TRAFAC class TrmE-Era-EngA-EngB-Septin-like GTPase superfamily. EngA (Der) GTPase family. Associates with the 50S ribosomal subunit.

Its function is as follows. GTPase that plays an essential role in the late steps of ribosome biogenesis. The chain is GTPase Der from Yersinia pseudotuberculosis serotype O:3 (strain YPIII).